The following is a 418-amino-acid chain: Gamma-glutamyl phosphate reductase (418 aa).

The protein belongs to the gamma-glutamyl phosphate reductase family.

It is found in the cytoplasm. The enzyme catalyses L-glutamate 5-semialdehyde + phosphate + NADP(+) = L-glutamyl 5-phosphate + NADPH + H(+). Its pathway is amino-acid biosynthesis; L-proline biosynthesis; L-glutamate 5-semialdehyde from L-glutamate: step 2/2. Its function is as follows. Catalyzes the NADPH-dependent reduction of L-glutamate 5-phosphate into L-glutamate 5-semialdehyde and phosphate. The product spontaneously undergoes cyclization to form 1-pyrroline-5-carboxylate. The sequence is that of Gamma-glutamyl phosphate reductase from Geobacter sulfurreducens (strain ATCC 51573 / DSM 12127 / PCA).